We begin with the raw amino-acid sequence, 138 residues long: Thyrotropin subunit beta (138 aa).

The N-terminal stretch at 1–20 is a signal peptide; sequence MTAIFLMSVLFGLACGQAMS. Disulfide bonds link cysteine 22-cysteine 72, cysteine 36-cysteine 87, cysteine 39-cysteine 125, cysteine 47-cysteine 103, cysteine 51-cysteine 105, and cysteine 108-cysteine 115. Asparagine 43 carries N-linked (GlcNAc...) asparagine glycosylation. A propeptide spanning residues 133 to 138 is cleaved from the precursor; the sequence is VVGLSI.

The protein belongs to the glycoprotein hormones subunit beta family. Heterodimer of a common alpha chain and a unique beta chain which confers biological specificity to thyrotropin, lutropin, follitropin and gonadotropin.

It is found in the secreted. Indispensable for the control of thyroid structure and metabolism. The chain is Thyrotropin subunit beta (TSHB) from Lama glama (Llama).